Consider the following 80-residue polypeptide: Large ribosomal subunit protein uL30 (80 aa).

It belongs to the universal ribosomal protein uL30 family. Part of the 50S ribosomal subunit.

The polypeptide is Large ribosomal subunit protein uL30 (Vesicomyosocius okutanii subsp. Calyptogena okutanii (strain HA)).